The primary structure comprises 176 residues: NAD(P)H-quinone oxidoreductase subunit 6, chloroplastic (176 aa).

5 consecutive transmembrane segments (helical) span residues Phe-10 to Pro-30, Pro-32 to Leu-52, Ala-61 to Met-81, Leu-92 to Ile-112, and Phe-152 to Thr-172.

It belongs to the complex I subunit 6 family. In terms of assembly, NDH is composed of at least 16 different subunits, 5 of which are encoded in the nucleus.

It localises to the plastid. It is found in the chloroplast thylakoid membrane. It carries out the reaction a plastoquinone + NADH + (n+1) H(+)(in) = a plastoquinol + NAD(+) + n H(+)(out). It catalyses the reaction a plastoquinone + NADPH + (n+1) H(+)(in) = a plastoquinol + NADP(+) + n H(+)(out). In terms of biological role, NDH shuttles electrons from NAD(P)H:plastoquinone, via FMN and iron-sulfur (Fe-S) centers, to quinones in the photosynthetic chain and possibly in a chloroplast respiratory chain. The immediate electron acceptor for the enzyme in this species is believed to be plastoquinone. Couples the redox reaction to proton translocation, and thus conserves the redox energy in a proton gradient. The chain is NAD(P)H-quinone oxidoreductase subunit 6, chloroplastic (ndhG) from Daucus carota (Wild carrot).